The following is a 742-amino-acid chain: MFSSCWLKSSVRYSRLIRQFSSENSFFKVELVPSDRKTPLQPRKVVAPRFEKKTRQKISDYLKQMATPEIEAKLAPLRAAVKEYGDLIRDLKAKGAPKIDIDKAVVELKARKRLLEDTEIALAPKEASFDRLKLEDLLKRRFFYDQSFAIYGGVTGLYDFGPMGCSLKANMLQEWRKHFILEEGMLEVDCTSLTPEPVLKASGHVDRFADWMVKDMKNGECFRADHLIKNSIEKLLNDKKTSAAVKQDGQDVLARLEGFDNKDMHEVITRFNFKSPITGNDLTEPIAFNLMFPTQIGPTGDFKAFLRPETAQGIFVNFKRLLEFNQGKLPFAAAQIGLGFRNEISPRQGLIRVREFTMCEIEHFVDPEDKSLAKFAKVADQKLVLFSACNQLDGAPAQEVAIGEAVAKKTVANETLGYYMARCHQFLMKVGIDGRRLRFRQHLSNEMAHYAQDCWDAEILTSYGWIECVGNADRACYDLQQHYKATNVKLVAEKKLPEPVDVNFVEAQANMALLGKSFKKDAKKIQTSLQQLTSEQVSALEEELLAKKLYNLSVDGQNYALTPEHLNIKKYTKKIHVQEITPSVIEPSYGIGRIMYALLEHSFRQREGDEQRTFLAFKPLVAPIKCSVLPISANDTLIPVMDAVKEELSRFEMSYKVDDSSGTIGRRYARTDEIGIPFGITVDFDSLKTTPFTVTIRHAETMSQIRLEVSELGRLISDLVAGRQQWSDAQAKYPKFEASATE.

In terms of domain architecture, WHEP-TRS spans 73-129; sequence KLAPLRAAVKEYGDLIRDLKAKGAPKIDIDKAVVELKARKRLLEDTEIALAPKEASF. Glycine is bound at residue E309. Residues 341–343 and 352–353 contribute to the ATP site; these read RNE and RV. Position 360 (E360) interacts with glycine. Residue 467–468 participates in ATP binding; that stretch reads EC. Residue 586 to 588 participates in glycine binding; it reads EPS. An ATP-binding site is contributed by R593.

Belongs to the class-II aminoacyl-tRNA synthetase family. Homodimer.

The protein resides in the cytoplasm. The protein localises to the cell projection. Its subcellular location is the axon. It localises to the secreted. It is found in the extracellular exosome. It catalyses the reaction tRNA(Gly) + glycine + ATP = glycyl-tRNA(Gly) + AMP + diphosphate. It carries out the reaction 2 ATP + H(+) = P(1),P(4)-bis(5'-adenosyl) tetraphosphate + diphosphate. Its function is as follows. Catalyzes the ATP-dependent ligation of glycine to the 3'-end of its cognate tRNA, via the formation of an aminoacyl-adenylate intermediate (Gly-AMP). Also produces diadenosine tetraphosphate (Ap4A), a universal pleiotropic signaling molecule needed for cell regulation pathways, by direct condensation of 2 ATPs. Thereby, may play a special role in Ap4A homeostasis. This Caenorhabditis elegans protein is Glycine--tRNA ligase.